Here is a 280-residue protein sequence, read N- to C-terminus: Putative pyruvate, phosphate dikinase regulatory protein (280 aa).

158–165 (GVSRTSKT) serves as a coordination point for ADP.

This sequence belongs to the pyruvate, phosphate/water dikinase regulatory protein family. PDRP subfamily.

The enzyme catalyses N(tele)-phospho-L-histidyl/L-threonyl-[pyruvate, phosphate dikinase] + ADP = N(tele)-phospho-L-histidyl/O-phospho-L-threonyl-[pyruvate, phosphate dikinase] + AMP + H(+). It carries out the reaction N(tele)-phospho-L-histidyl/O-phospho-L-threonyl-[pyruvate, phosphate dikinase] + phosphate + H(+) = N(tele)-phospho-L-histidyl/L-threonyl-[pyruvate, phosphate dikinase] + diphosphate. In terms of biological role, bifunctional serine/threonine kinase and phosphorylase involved in the regulation of the pyruvate, phosphate dikinase (PPDK) by catalyzing its phosphorylation/dephosphorylation. This chain is Putative pyruvate, phosphate dikinase regulatory protein, found in Lactobacillus johnsonii (strain CNCM I-12250 / La1 / NCC 533).